The chain runs to 160 residues: Phosphopantetheine adenylyltransferase (160 aa).

Position 9 (Ser9) interacts with substrate. ATP-binding positions include 9–10 (SF) and His17. Substrate contacts are provided by Lys41, Ile73, and Lys87. ATP contacts are provided by residues 88 to 90 (GLR), Glu98, and 122 to 128 (YSFVSSS).

It belongs to the bacterial CoaD family. Homohexamer. It depends on Mg(2+) as a cofactor.

It is found in the cytoplasm. The catalysed reaction is (R)-4'-phosphopantetheine + ATP + H(+) = 3'-dephospho-CoA + diphosphate. Its pathway is cofactor biosynthesis; coenzyme A biosynthesis; CoA from (R)-pantothenate: step 4/5. Its function is as follows. Reversibly transfers an adenylyl group from ATP to 4'-phosphopantetheine, yielding dephospho-CoA (dPCoA) and pyrophosphate. The polypeptide is Phosphopantetheine adenylyltransferase (Mycolicibacterium gilvum (strain PYR-GCK) (Mycobacterium gilvum (strain PYR-GCK))).